Here is a 325-residue protein sequence, read N- to C-terminus: Tetraacyldisaccharide 4'-kinase (325 aa).

Position 53-60 (53-60 (SVGGNGKT)) interacts with ATP.

The protein belongs to the LpxK family.

The enzyme catalyses a lipid A disaccharide + ATP = a lipid IVA + ADP + H(+). It participates in glycolipid biosynthesis; lipid IV(A) biosynthesis; lipid IV(A) from (3R)-3-hydroxytetradecanoyl-[acyl-carrier-protein] and UDP-N-acetyl-alpha-D-glucosamine: step 6/6. Functionally, transfers the gamma-phosphate of ATP to the 4'-position of a tetraacyldisaccharide 1-phosphate intermediate (termed DS-1-P) to form tetraacyldisaccharide 1,4'-bis-phosphate (lipid IVA). This chain is Tetraacyldisaccharide 4'-kinase, found in Mannheimia succiniciproducens (strain KCTC 0769BP / MBEL55E).